The sequence spans 120 residues: Small ribosomal subunit protein bS6 (120 aa).

Residues 93-120 (KKADTAPSSMMKTVEREEARKASQTEQA) form a disordered region. Basic and acidic residues predominate over residues 105–120 (TVEREEARKASQTEQA).

This sequence belongs to the bacterial ribosomal protein bS6 family.

Functionally, binds together with bS18 to 16S ribosomal RNA. This chain is Small ribosomal subunit protein bS6, found in Delftia acidovorans (strain DSM 14801 / SPH-1).